The primary structure comprises 236 residues: UPF0257 lipoprotein YnfC (236 aa).

An N-terminal signal peptide occupies residues Met-1–Gly-16. Cys-17 carries the N-palmitoyl cysteine lipid modification. Cys-17 carries the S-diacylglycerol cysteine lipid modification.

This sequence belongs to the UPF0257 family.

Its subcellular location is the cell membrane. This Salmonella heidelberg (strain SL476) protein is UPF0257 lipoprotein YnfC.